Reading from the N-terminus, the 430-residue chain is Adenylosuccinate synthetase (430 aa).

GTP-binding positions include 12 to 18 and 40 to 42; these read GDEGKGK and GHT. The active-site Proton acceptor is the Asp13. Positions 13 and 40 each coordinate Mg(2+). IMP is bound by residues 13-16, 38-41, Thr128, Arg142, Gln223, Thr238, and Arg302; these read DEGK and NAGH. His41 serves as the catalytic Proton donor. Residue 298 to 304 coordinates substrate; the sequence is TTTGRPR. GTP is bound by residues Arg304, 330–332, and 413–415; these read SID and SVG.

Belongs to the adenylosuccinate synthetase family. As to quaternary structure, homodimer. The cofactor is Mg(2+).

Its subcellular location is the cytoplasm. The enzyme catalyses IMP + L-aspartate + GTP = N(6)-(1,2-dicarboxyethyl)-AMP + GDP + phosphate + 2 H(+). It functions in the pathway purine metabolism; AMP biosynthesis via de novo pathway; AMP from IMP: step 1/2. Functionally, plays an important role in the de novo pathway of purine nucleotide biosynthesis. Catalyzes the first committed step in the biosynthesis of AMP from IMP. In Lactococcus lactis subsp. cremoris (strain SK11), this protein is Adenylosuccinate synthetase.